A 236-amino-acid polypeptide reads, in one-letter code: Pyridoxine 5'-phosphate synthase (236 aa).

Asparagine 6 lines the 3-amino-2-oxopropyl phosphate pocket. 8-9 (DH) is a binding site for 1-deoxy-D-xylulose 5-phosphate. Arginine 17 contributes to the 3-amino-2-oxopropyl phosphate binding site. The active-site Proton acceptor is histidine 42. 1-deoxy-D-xylulose 5-phosphate contacts are provided by arginine 44 and histidine 49. Catalysis depends on glutamate 69, which acts as the Proton acceptor. Threonine 99 is a 1-deoxy-D-xylulose 5-phosphate binding site. Histidine 190 acts as the Proton donor in catalysis. 3-amino-2-oxopropyl phosphate contacts are provided by residues glycine 191 and 212–213 (GH).

It belongs to the PNP synthase family. As to quaternary structure, homooctamer; tetramer of dimers.

It is found in the cytoplasm. The catalysed reaction is 3-amino-2-oxopropyl phosphate + 1-deoxy-D-xylulose 5-phosphate = pyridoxine 5'-phosphate + phosphate + 2 H2O + H(+). Its pathway is cofactor biosynthesis; pyridoxine 5'-phosphate biosynthesis; pyridoxine 5'-phosphate from D-erythrose 4-phosphate: step 5/5. Catalyzes the complicated ring closure reaction between the two acyclic compounds 1-deoxy-D-xylulose-5-phosphate (DXP) and 3-amino-2-oxopropyl phosphate (1-amino-acetone-3-phosphate or AAP) to form pyridoxine 5'-phosphate (PNP) and inorganic phosphate. The polypeptide is Pyridoxine 5'-phosphate synthase (Prosthecochloris aestuarii (strain DSM 271 / SK 413)).